The sequence spans 133 residues: Peptide methionine sulfoxide reductase MsrB (133 aa).

Positions 1–12 (MSEKVQKSEHEW) are enriched in basic and acidic residues. The interval 1-36 (MSEKVQKSEHEWQQQLTPEQYRVTREKGTERPFTGD) is disordered. The 124-residue stretch at 9–132 (EHEWQQQLTP…NSVSLDFHPG (124 aa)) folds into the MsrB domain. Zn(2+) contacts are provided by Cys48, Cys51, Cys97, and Cys100. Cys121 functions as the Nucleophile in the catalytic mechanism.

The protein belongs to the MsrB Met sulfoxide reductase family. It depends on Zn(2+) as a cofactor.

The enzyme catalyses L-methionyl-[protein] + [thioredoxin]-disulfide + H2O = L-methionyl-(R)-S-oxide-[protein] + [thioredoxin]-dithiol. This chain is Peptide methionine sulfoxide reductase MsrB, found in Chromohalobacter salexigens (strain ATCC BAA-138 / DSM 3043 / CIP 106854 / NCIMB 13768 / 1H11).